A 608-amino-acid polypeptide reads, in one-letter code: Albumin 2 (608 aa).

The first 14 residues, 1 to 14, serve as a signal peptide directing secretion; the sequence is MQWLSVCSLLVLLS. The propeptide occupies 15 to 18; sequence VLSR. Albumin domains are found at residues 19-205, 206-398, and 402-600; these read SQAQ…TFQH, AIAK…AGSD, and KITD…KLVS. 18 cysteine pairs are disulfide-bonded: Cys-26-Cys-72, Cys-71-Cys-80, Cys-93-Cys-108, Cys-107-Cys-118, Cys-142-Cys-187, Cys-186-Cys-195, Cys-218-Cys-264, Cys-263-Cys-271, Cys-283-Cys-299, Cys-298-Cys-309, Cys-336-Cys-381, Cys-380-Cys-389, Cys-414-Cys-460, Cys-459-Cys-471, Cys-484-Cys-500, Cys-499-Cys-510, Cys-537-Cys-582, and Cys-581-Cys-590. Residue Asn-501 is glycosylated (N-linked (GlcNAc...) asparagine).

It belongs to the ALB/AFP/VDB family. As to expression, plasma.

The protein resides in the secreted. Binds water, Ca(2+), Na(+), K(+), fatty acids, hormones, bilirubin and drugs. Its main function is the regulation of the colloidal osmotic pressure of blood. In Salmo salar (Atlantic salmon), this protein is Albumin 2 (alb2).